Consider the following 555-residue polypeptide: MARVEL domain-containing protein 2 (555 aa).

Basic and acidic residues predominate over residues 1-20; it reads MSSSDARSRIRDRGYSEVPR. Positions 1 to 71 are disordered; it reads MSSSDARSRI…FYSSDTEEPA (71 aa). Topologically, residues 1–191 are cytoplasmic; sequence MSSSDARSRI…YMKSWAGLLR (191 aa). Over residues 46 to 59 the composition is skewed to pro residues; the sequence is PLPPPPLPLQPPFG. Phosphoserine occurs at positions 117, 121, and 158. A disordered region spans residues 118 to 142; that stretch reads PPASPARANHHPYKDPSRGSQGTFN. A Phosphothreonine modification is found at T163. Positions 185 to 364 constitute an MARVEL domain; sequence SWAGLLRILG…SALVCLKLWR (180 aa). A helical membrane pass occupies residues 192–212; it reads ILGVVELLLGAGVFACVTAYI. Over 213 to 251 the chain is Extracellular; it reads HKDNEWYNLFGYTQPYGMGGLGSLGNTYGGYYYSGPKTP. Residues 252–272 traverse the membrane as a helical segment; it reads FVLVVAGLAWITTIIILVLGM. Residues 273–288 lie on the Cytoplasmic side of the membrane; that stretch reads SMYYRTILLDSNWWPL. Residues 289–309 form a helical membrane-spanning segment; it reads TEFGVNVALFILYMAAAIVYV. At 310-338 the chain is on the extracellular side; sequence NDTNRGGLCYYPLFNTPMNAMFCRVEGGQ. Residues 339 to 359 traverse the membrane as a helical segment; sequence IAAMIFLFVTMIVYLVSALVC. At 360 to 555 the chain is on the cytoplasmic side; the sequence is LKLWRHEAAR…VMNWDTQGYP (196 aa). Residue S384 is modified to Phosphoserine. K408 participates in a covalent cross-link: Glycyl lysine isopeptide (Lys-Gly) (interchain with G-Cter in ubiquitin). In terms of domain architecture, OCEL spans 437-548; sequence PDYVAKYPVI…RIQEYDKVMN (112 aa). Positions 521–545 form a coiled coil; it reads EKKERCDYLKNKLSHIKQRIQEYDK.

This sequence belongs to the ELL/occludin family. As to quaternary structure, interacts with TJP1. Interacts with the ubiquitin ligase ITCH. Interacts (via C-terminal cytoplasmic domain) with LSR (via the cytoplasmic domain), ILDR1 and ILDR2; the interaction is required to recruit MARVELD2 to tricellular contacts. In terms of processing, ubiquitinated by ITCH; but this ubiquitination does not lead to proteasomal degradation. Polyubiquitinated at Lys-408 via 'Lys-63'-linked ubiquitin chains; deubiquitinated by USP53. Phosphorylated. As to expression, detected in small intestine, stomach and kidney, in epithelial cells. Detected in pancreas, retina and lung, and in stria vascularis, utricle and the organ of Conti in the inner ear (at protein level). Predominantly detected in small intestine, lung and kidney, with lower levels in liver, testis and brain. In colon, expressed in the entire crypts.

It is found in the cell membrane. It localises to the cell junction. The protein localises to the tight junction. Functionally, plays a role in the formation of tricellular tight junctions and of epithelial barriers. Required for normal hearing via its role in the separation of the endolymphatic and perilymphatic spaces of the organ of Corti in the inner ear, and for normal survival of hair cells in the organ of Corti. This chain is MARVEL domain-containing protein 2, found in Mus musculus (Mouse).